Consider the following 1431-residue polypeptide: Caskin-1 (1431 aa).

ANK repeat units follow at residues 48–77, 81–110, 114–143, 147–176, 188–217, and 220–249; these read DGFS…AVDI, KGMR…AVNV, EGHI…NPCM, SGKT…CAAL, NGTS…DINR, and KSGT…NAQV. Y253 is subject to Phosphotyrosine. Residues 281–347 form the SH3 domain; that stretch reads SAALQVRATK…PSSLGEAIVK (67 aa). The tract at residues 348 to 372 is disordered; sequence RAGSRTGSEPSPPQGGGSLGPSAPP. The residue at position 358 (S358) is a Phosphoserine. The interval 375-471 is CASK-binding; the sequence is IWVLRKPFAG…PKKLESASAS (97 aa). R398 carries the omega-N-methylarginine modification. Polar residues predominate over residues 420–430; sequence SQKSVSESSPG. A disordered region spans residues 420-471; that stretch reads SQKSVSESSPGDSPVKPPEGSSGAARSQPPAAHAGQVYGEQPPKKLESASAS. Phosphoserine occurs at positions 423 and 432. 2 consecutive SAM domains span residues 476–539 and 545–609; these read KSAE…LNIP and HKPA…LAEL. Phosphoserine is present on residues S637 and S650. Low complexity predominate over residues 669 to 679; that stretch reads LSGPAEAGAAA. Disordered regions lie at residues 669–1000 and 1016–1041; these read LSGP…TGSA and GGGG…EPGR. Polar residues predominate over residues 692-712; it reads RTTSRESSLSGRARHISSSQE. 2 positions are modified to phosphoserine: S723 and S728. T741 is modified (phosphothreonine). S791 is subject to Phosphoserine. The segment covering 848–860 has biased composition (pro residues); sequence PPAPGPAPPPVPA. Residues S891, S893, and S989 each carry the phosphoserine modification. A compositionally biased stretch (pro residues) spans 1028–1037; sequence GHPTPRPASP. T1067 is subject to Phosphothreonine. Phosphoserine is present on S1069. 2 disordered regions span residues 1072-1372 and 1389-1410; these read VTGL…RQKL and KIRQ…STGS. The segment covering 1148–1160 has biased composition (basic and acidic residues); it reads DTVKRRPKAKEPD. Residues 1191-1215 are compositionally biased toward pro residues; that stretch reads PELPPPPPPAEPPPADLMQLPPLPL. Over residues 1236-1247 the composition is skewed to polar residues; that stretch reads QPVSKIQGSPTP. The residue at position 1259 (S1259) is a Phosphoserine. A Phosphothreonine modification is found at T1268. Residues 1268–1283 are compositionally biased toward pro residues; it reads TPPPVSPKPPPPPTAP. Low complexity-rich tracts occupy residues 1284-1299, 1309-1327, and 1345-1359; these read KPAK…SATP, PPAA…SASP, and PRAA…PVAS. S1363 is subject to Phosphoserine. The segment covering 1389-1407 has biased composition (basic and acidic residues); the sequence is KIRQEDGQGPRPSSIEEKS.

Binds the CaM kinase domain of CASK. Forms a ternary complex with CASK and LIN7A, LIN7B or LIN7C. Competes with APBA1 that forms a similar complex with CASK and LIN7 proteins. The tripartite complex CASKIN1/CASK/LIN7(A/B/C) binds the cytoplasmic tail of NRXN1. Polymerizes, via the tandem SAM domains, to form long, 8 nM wide fibers, upon which other proteins can assemble.

It localises to the cytoplasm. In terms of biological role, may link the scaffolding protein CASK to downstream intracellular effectors. This Mus musculus (Mouse) protein is Caskin-1 (Caskin1).